The sequence spans 201 residues: Potassium-transporting ATPase KdpC subunit (201 aa).

Residues 7–27 (PAFVVLIALTALTGLAYPLAM) form a helical membrane-spanning segment.

Belongs to the KdpC family. The system is composed of three essential subunits: KdpA, KdpB and KdpC.

The protein localises to the cell inner membrane. In terms of biological role, part of the high-affinity ATP-driven potassium transport (or Kdp) system, which catalyzes the hydrolysis of ATP coupled with the electrogenic transport of potassium into the cytoplasm. This subunit acts as a catalytic chaperone that increases the ATP-binding affinity of the ATP-hydrolyzing subunit KdpB by the formation of a transient KdpB/KdpC/ATP ternary complex. The sequence is that of Potassium-transporting ATPase KdpC subunit from Xanthobacter autotrophicus (strain ATCC BAA-1158 / Py2).